The chain runs to 163 residues: NADH-quinone oxidoreductase subunit I (163 aa).

4Fe-4S ferredoxin-type domains follow at residues 55–84 (RRYP…IEAE) and 94–123 (TRYD…EGPN). [4Fe-4S] cluster is bound by residues C64, C67, C70, C74, C103, C106, C109, and C113.

The protein belongs to the complex I 23 kDa subunit family. As to quaternary structure, NDH-1 is composed of 14 different subunits. Subunits NuoA, H, J, K, L, M, N constitute the membrane sector of the complex. It depends on [4Fe-4S] cluster as a cofactor.

Its subcellular location is the cell inner membrane. It carries out the reaction a quinone + NADH + 5 H(+)(in) = a quinol + NAD(+) + 4 H(+)(out). Its function is as follows. NDH-1 shuttles electrons from NADH, via FMN and iron-sulfur (Fe-S) centers, to quinones in the respiratory chain. The immediate electron acceptor for the enzyme in this species is believed to be ubiquinone. Couples the redox reaction to proton translocation (for every two electrons transferred, four hydrogen ions are translocated across the cytoplasmic membrane), and thus conserves the redox energy in a proton gradient. The protein is NADH-quinone oxidoreductase subunit I of Caulobacter vibrioides (strain ATCC 19089 / CIP 103742 / CB 15) (Caulobacter crescentus).